Here is a 660-residue protein sequence, read N- to C-terminus: Probable serine/threonine-protein kinase CE0033 (660 aa).

Residues 9–278 enclose the Protein kinase domain; that stretch reads YELGASIGSG…AEMAADLELL (270 aa). Residues 15 to 23 and Lys38 each bind ATP; that span reads IGSGGMSEV. Residue Asp136 is the Proton acceptor of the active site. A disordered region spans residues 288-319; it reads RAHVEKPDEPETVVVPQRLSTPPPPPTPAMPA. 3 consecutive PASTA domains span residues 377-443, 444-512, and 513-577; these read SAST…TISS, GREV…TVST, and GPSL…EISN.

The protein belongs to the protein kinase superfamily. Ser/Thr protein kinase family.

It carries out the reaction L-seryl-[protein] + ATP = O-phospho-L-seryl-[protein] + ADP + H(+). The catalysed reaction is L-threonyl-[protein] + ATP = O-phospho-L-threonyl-[protein] + ADP + H(+). In Corynebacterium efficiens (strain DSM 44549 / YS-314 / AJ 12310 / JCM 11189 / NBRC 100395), this protein is Probable serine/threonine-protein kinase CE0033.